Consider the following 370-residue polypeptide: Uroporphyrinogen decarboxylase (370 aa).

Substrate-binding positions include 29–33, Asp-79, Tyr-155, Ser-210, and His-342; that span reads RQAGR.

The protein belongs to the uroporphyrinogen decarboxylase family. Homodimer.

The protein localises to the cytoplasm. The enzyme catalyses uroporphyrinogen III + 4 H(+) = coproporphyrinogen III + 4 CO2. It functions in the pathway porphyrin-containing compound metabolism; protoporphyrin-IX biosynthesis; coproporphyrinogen-III from 5-aminolevulinate: step 4/4. In terms of biological role, catalyzes the decarboxylation of four acetate groups of uroporphyrinogen-III to yield coproporphyrinogen-III. The chain is Uroporphyrinogen decarboxylase from Acidovorax sp. (strain JS42).